The chain runs to 524 residues: Zinc finger protein 346 (524 aa).

7 Matrin-type zinc fingers span residues 34-64 (TQCK…KVRR), 92-126 (DRSK…LRLR), 162-192 (KFCK…QETK), 226-260 (GKGF…LMSM), 286-316 (FSCD…HLKS), 343-373 (FSCD…HLMS), and 400-430 (FSCD…QLMS). Zn(2+)-binding residues include C36, C39, H52, H58, C97, C100, H113, and H119. Disordered regions lie at residues 453 to 486 (SAGG…GSLP) and 494 to 513 (PLYP…TMSP). The segment covering 476-486 (PKGPSSFGSLP) has biased composition (low complexity).

Its subcellular location is the nucleus. It is found in the cytoplasm. Binds preferentially to dsRNA, but also to RNA-DNA hybrids. This chain is Zinc finger protein 346, found in Xenopus laevis (African clawed frog).